A 437-amino-acid polypeptide reads, in one-letter code: UDP-N-acetylmuramoylalanine--D-glutamate ligase (437 aa).

115–121 (GSNGKST) contacts ATP.

It belongs to the MurCDEF family.

Its subcellular location is the cytoplasm. It carries out the reaction UDP-N-acetyl-alpha-D-muramoyl-L-alanine + D-glutamate + ATP = UDP-N-acetyl-alpha-D-muramoyl-L-alanyl-D-glutamate + ADP + phosphate + H(+). It functions in the pathway cell wall biogenesis; peptidoglycan biosynthesis. Cell wall formation. Catalyzes the addition of glutamate to the nucleotide precursor UDP-N-acetylmuramoyl-L-alanine (UMA). The sequence is that of UDP-N-acetylmuramoylalanine--D-glutamate ligase from Vibrio campbellii (strain ATCC BAA-1116).